Here is a 609-residue protein sequence, read N- to C-terminus: Arginine--tRNA ligase (609 aa).

The 'HIGH' region signature appears at 132-142; the sequence is ANPTSSLHVGH.

Belongs to the class-I aminoacyl-tRNA synthetase family. Monomer.

It localises to the cytoplasm. It carries out the reaction tRNA(Arg) + L-arginine + ATP = L-arginyl-tRNA(Arg) + AMP + diphosphate. The polypeptide is Arginine--tRNA ligase (Psychrobacter cryohalolentis (strain ATCC BAA-1226 / DSM 17306 / VKM B-2378 / K5)).